Consider the following 165-residue polypeptide: uncharacterized protein (165 aa).

A helical transmembrane segment spans residues 20-40 (INLIASIVLWLLFVITVIGTF). Asparagine 51 carries N-linked (GlcNAc...) asparagine; by host glycosylation. Residues 97-117 (VGIIVILIFMLMIIMNGFYQM) form a helical membrane-spanning segment.

The protein localises to the membrane. This is an uncharacterized protein from Acanthamoeba polyphaga (Amoeba).